We begin with the raw amino-acid sequence, 372 residues long: NAD(P)H-quinone oxidoreductase subunit 1 (372 aa).

8 consecutive transmembrane segments (helical) span residues isoleucine 27 to valine 47, isoleucine 97 to valine 117, valine 128 to methionine 148, leucine 176 to valine 196, isoleucine 204 to leucine 224, isoleucine 266 to valine 286, serine 308 to leucine 328, and phenylalanine 347 to proline 367.

The protein belongs to the complex I subunit 1 family. As to quaternary structure, NDH-1 is composed of at least 11 different subunits.

It is found in the cellular thylakoid membrane. It carries out the reaction a plastoquinone + NADH + (n+1) H(+)(in) = a plastoquinol + NAD(+) + n H(+)(out). The enzyme catalyses a plastoquinone + NADPH + (n+1) H(+)(in) = a plastoquinol + NADP(+) + n H(+)(out). Its function is as follows. NDH-1 shuttles electrons from an unknown electron donor, via FMN and iron-sulfur (Fe-S) centers, to quinones in the respiratory and/or the photosynthetic chain. The immediate electron acceptor for the enzyme in this species is believed to be plastoquinone. Couples the redox reaction to proton translocation, and thus conserves the redox energy in a proton gradient. The polypeptide is NAD(P)H-quinone oxidoreductase subunit 1 (Prochlorococcus marinus (strain MIT 9312)).